We begin with the raw amino-acid sequence, 127 residues long: uncharacterized protein (127 aa).

A helical membrane pass occupies residues Phe-12 to Phe-32.

The protein resides in the membrane. This is an uncharacterized protein from Saccharomyces cerevisiae (strain ATCC 204508 / S288c) (Baker's yeast).